A 219-amino-acid polypeptide reads, in one-letter code: Histone H1.11R (219 aa).

Low complexity-rich tracts occupy residues 1 to 20 (MAET…AAKA) and 28 to 40 (AAGG…PAGP). 2 disordered regions span residues 1 to 42 (MAET…GPSV) and 89 to 219 (LVSK…AKKK). One can recognise an H15 domain in the interval 38–111 (AGPSVTELIT…GASGSFRLSK (74 aa)). Basic residues-rich tracts occupy residues 121 to 135 (PKKK…KAAA), 143 to 160 (KKPK…KAKK), 168 to 183 (KSVK…KKAV), and 192 to 219 (KAVK…AKKK).

It belongs to the histone H1/H5 family.

Its subcellular location is the nucleus. The protein resides in the chromosome. Histones H1 are necessary for the condensation of nucleosome chains into higher-order structures. The protein is Histone H1.11R of Gallus gallus (Chicken).